A 337-amino-acid polypeptide reads, in one-letter code: Ketol-acid reductoisomerase (NADP(+)) (337 aa).

Residues 3 to 183 (VEVFYDDDAD…GGTRAGVIKT (181 aa)) form the KARI N-terminal Rossmann domain. NADP(+) contacts are provided by residues 26–29 (YGSQ), serine 52, serine 54, and 84–87 (DTAQ). Histidine 109 is a catalytic residue. Residue glycine 135 coordinates NADP(+). Residues 184-329 (TFTEETETDL…GRLRAMMSWV (146 aa)) form the KARI C-terminal knotted domain. Residues aspartate 192, glutamate 196, glutamate 228, and glutamate 232 each contribute to the Mg(2+) site. Serine 253 is a substrate binding site.

The protein belongs to the ketol-acid reductoisomerase family. Mg(2+) is required as a cofactor.

It carries out the reaction (2R)-2,3-dihydroxy-3-methylbutanoate + NADP(+) = (2S)-2-acetolactate + NADPH + H(+). The catalysed reaction is (2R,3R)-2,3-dihydroxy-3-methylpentanoate + NADP(+) = (S)-2-ethyl-2-hydroxy-3-oxobutanoate + NADPH + H(+). The protein operates within amino-acid biosynthesis; L-isoleucine biosynthesis; L-isoleucine from 2-oxobutanoate: step 2/4. It functions in the pathway amino-acid biosynthesis; L-valine biosynthesis; L-valine from pyruvate: step 2/4. Involved in the biosynthesis of branched-chain amino acids (BCAA). Catalyzes an alkyl-migration followed by a ketol-acid reduction of (S)-2-acetolactate (S2AL) to yield (R)-2,3-dihydroxy-isovalerate. In the isomerase reaction, S2AL is rearranged via a Mg-dependent methyl migration to produce 3-hydroxy-3-methyl-2-ketobutyrate (HMKB). In the reductase reaction, this 2-ketoacid undergoes a metal-dependent reduction by NADPH to yield (R)-2,3-dihydroxy-isovalerate. The polypeptide is Ketol-acid reductoisomerase (NADP(+)) (Salinispora tropica (strain ATCC BAA-916 / DSM 44818 / JCM 13857 / NBRC 105044 / CNB-440)).